The chain runs to 798 residues: Glycogen phosphorylase (798 aa).

K646 is subject to N6-(pyridoxal phosphate)lysine.

Belongs to the glycogen phosphorylase family. It depends on pyridoxal 5'-phosphate as a cofactor.

It carries out the reaction [(1-&gt;4)-alpha-D-glucosyl](n) + phosphate = [(1-&gt;4)-alpha-D-glucosyl](n-1) + alpha-D-glucose 1-phosphate. Its function is as follows. Phosphorylase is an important allosteric enzyme in carbohydrate metabolism. Enzymes from different sources differ in their regulatory mechanisms and in their natural substrates. However, all known phosphorylases share catalytic and structural properties. This chain is Glycogen phosphorylase (glgP), found in Bacillus subtilis (strain 168).